The chain runs to 196 residues: 3-isopropylmalate dehydratase small subunit (196 aa).

Belongs to the LeuD family. LeuD type 1 subfamily. As to quaternary structure, heterodimer of LeuC and LeuD.

The catalysed reaction is (2R,3S)-3-isopropylmalate = (2S)-2-isopropylmalate. Its pathway is amino-acid biosynthesis; L-leucine biosynthesis; L-leucine from 3-methyl-2-oxobutanoate: step 2/4. Its function is as follows. Catalyzes the isomerization between 2-isopropylmalate and 3-isopropylmalate, via the formation of 2-isopropylmaleate. The protein is 3-isopropylmalate dehydratase small subunit of Rhodopirellula baltica (strain DSM 10527 / NCIMB 13988 / SH1).